The sequence spans 551 residues: BAG family molecular chaperone regulator 8, chloroplastic (551 aa).

A compositionally biased stretch (basic residues) spans 1–19 (MASHHHHNHNHVCSRHQNH). The interval 1-46 (MASHHHHNHNHVCSRHQNHHNNTPQFATSPNCCNKSNHPSPPPAED) is disordered. A chloroplast-targeting transit peptide spans 1-52 (MASHHHHNHNHVCSRHQNHHNNTPQFATSPNCCNKSNHPSPPPAEDNLLHLV). The span at 20 to 38 (HNNTPQFATSPNCCNKSNH) shows a compositional bias: polar residues. Positions 131–160 (RDSAARVIQTHFRSYLVHRSISFRQLKELA) constitute an IQ domain. Positions 147–228 (VHRSISFRQL…RFVQYVDDCV (82 aa)) constitute a BAG domain. Residues 246–281 (GKKPQGFGTSSEDEDNNADMSDDSEEVPVSSIDKRK) form a disordered region. Acidic residues predominate over residues 256–271 (SEDEDNNADMSDDSEE). Phosphoserine is present on serine 332. 2 disordered regions span residues 414–433 (DEGK…KGSG) and 450–551 (NVYK…KMEP). A compositionally biased stretch (basic and acidic residues) spans 479–499 (GEEKGNVNEVEEIKYVPKENE). Positions 500 to 513 (SFEEEEEKETDSEN) are enriched in acidic residues. Residues 522–534 (EGDKRVTKKEVQH) show a composition bias toward basic and acidic residues.

As to quaternary structure, binds to the ATPase domain of HSP70/HSC70 chaperones.

It localises to the plastid. The protein resides in the chloroplast. Its function is as follows. Co-chaperone that regulates diverse cellular pathways, such as programmed cell death and stress responses. The polypeptide is BAG family molecular chaperone regulator 8, chloroplastic (BAG1) (Arabidopsis thaliana (Mouse-ear cress)).